A 238-amino-acid polypeptide reads, in one-letter code: Protein shisa-3 homolog (238 aa).

The signal sequence occupies residues 1-21; that stretch reads MGALLAFCLLVGLLRWGPAGA. The Lumenal segment spans residues 22–98; the sequence is QQPGEYCHGW…GITAQPVYVP (77 aa). A helical membrane pass occupies residues 99–119; the sequence is FLIVGSIFIAFIILGSLVAIY. Over 120-238 the chain is Cytoplasmic; that stretch reads CCTCLRPKEP…GKSCPDFSSS (119 aa).

The protein belongs to the shisa family.

It is found in the endoplasmic reticulum membrane. Plays an essential role in the maturation of presomitic mesoderm cells by individual attenuation of both FGF and WNT signaling. This chain is Protein shisa-3 homolog (Shisa3), found in Mus musculus (Mouse).